The sequence spans 350 residues: Biotin synthase (350 aa).

The 225-residue stretch at 54-278 (REIQLSTLLS…TMPQSYVRLS (225 aa)) folds into the Radical SAM core domain. Residues Cys69, Cys73, and Cys76 each contribute to the [4Fe-4S] cluster site. 4 residues coordinate [2Fe-2S] cluster: Cys113, Cys144, Cys204, and Arg276.

Belongs to the radical SAM superfamily. Biotin synthase family. Homodimer. The cofactor is [4Fe-4S] cluster. [2Fe-2S] cluster is required as a cofactor.

It catalyses the reaction (4R,5S)-dethiobiotin + (sulfur carrier)-SH + 2 reduced [2Fe-2S]-[ferredoxin] + 2 S-adenosyl-L-methionine = (sulfur carrier)-H + biotin + 2 5'-deoxyadenosine + 2 L-methionine + 2 oxidized [2Fe-2S]-[ferredoxin]. Its pathway is cofactor biosynthesis; biotin biosynthesis; biotin from 7,8-diaminononanoate: step 2/2. In terms of biological role, catalyzes the conversion of dethiobiotin (DTB) to biotin by the insertion of a sulfur atom into dethiobiotin via a radical-based mechanism. The sequence is that of Biotin synthase from Neisseria gonorrhoeae (strain ATCC 700825 / FA 1090).